Here is a 202-residue protein sequence, read N- to C-terminus: U-Kazal-Dg21.2 (202 aa).

Positions 1–20 (MKYFLWSAVTIFAIVNVVGA) are cleaved as a signal peptide. A propeptide spanning residues 21–87 (KNSDFDPRCL…SFCQVEEDFD (67 aa)) is cleaved from the precursor. 3 consecutive Kazal-like domains span residues 23-77 (SDFD…KTLM), 85-140 (DFDS…ICRN), and 148-202 (IDPK…KGEC). Intrachain disulfides connect cysteine 29–cysteine 62, cysteine 33–cysteine 55, cysteine 91–cysteine 124, cysteine 95–cysteine 117, and cysteine 103–cysteine 138. A glycan (N-linked (GlcNAc...) asparagine) is linked at asparagine 140. A propeptide spanning residues 142–202 (SFKSELIDPK…NWTLIRKGEC (61 aa)) is cleaved from the precursor. Cystine bridges form between cysteine 154-cysteine 187, cysteine 158-cysteine 180, and cysteine 166-cysteine 202. N-linked (GlcNAc...) asparagine glycosylation occurs at asparagine 193.

Expressed by the venom gland.

It is found in the secreted. Its function is as follows. May act as a serine protease inhibitor, since it possess the kazal serine protease inhibitor signature. The recombinant peptide does not produce toxic effects on insects. This chain is U-Kazal-Dg21.2, found in Dolopus genitalis (Giant Australian assassin fly).